A 123-amino-acid polypeptide reads, in one-letter code: Putative hypoxanthine phosphoribosyltransferase (123 aa).

In terms of biological role, may play a role in purine salvage. The protein is Putative hypoxanthine phosphoribosyltransferase of Methanosarcina mazei (strain ATCC BAA-159 / DSM 3647 / Goe1 / Go1 / JCM 11833 / OCM 88) (Methanosarcina frisia).